We begin with the raw amino-acid sequence, 217 residues long: 3,4-dihydroxy-2-butanone 4-phosphate synthase (217 aa).

D-ribulose 5-phosphate contacts are provided by residues 37–38 (RE), Asp42, 150–154 (RRGHT), and Glu174. Glu38 is a Mg(2+) binding site. His153 lines the Mg(2+) pocket.

The protein belongs to the DHBP synthase family. In terms of assembly, homodimer. It depends on Mg(2+) as a cofactor. The cofactor is Mn(2+).

It catalyses the reaction D-ribulose 5-phosphate = (2S)-2-hydroxy-3-oxobutyl phosphate + formate + H(+). The protein operates within cofactor biosynthesis; riboflavin biosynthesis; 2-hydroxy-3-oxobutyl phosphate from D-ribulose 5-phosphate: step 1/1. In terms of biological role, catalyzes the conversion of D-ribulose 5-phosphate to formate and 3,4-dihydroxy-2-butanone 4-phosphate. In Syntrophotalea carbinolica (strain DSM 2380 / NBRC 103641 / GraBd1) (Pelobacter carbinolicus), this protein is 3,4-dihydroxy-2-butanone 4-phosphate synthase.